Here is a 358-residue protein sequence, read N- to C-terminus: tRNA-specific 2-thiouridylase MnmA (358 aa).

ATP contacts are provided by residues 6-13 (ALSGGVDS) and methionine 32. The Nucleophile role is filled by cysteine 103. An intrachain disulfide couples cysteine 103 to cysteine 201. Glycine 127 contacts ATP. The tract at residues 151–153 (KDQ) is interaction with tRNA. Catalysis depends on cysteine 201, which acts as the Cysteine persulfide intermediate.

Belongs to the MnmA/TRMU family.

It localises to the cytoplasm. The catalysed reaction is S-sulfanyl-L-cysteinyl-[protein] + uridine(34) in tRNA + AH2 + ATP = 2-thiouridine(34) in tRNA + L-cysteinyl-[protein] + A + AMP + diphosphate + H(+). Its function is as follows. Catalyzes the 2-thiolation of uridine at the wobble position (U34) of tRNA, leading to the formation of s(2)U34. The chain is tRNA-specific 2-thiouridylase MnmA from Thermotoga petrophila (strain ATCC BAA-488 / DSM 13995 / JCM 10881 / RKU-1).